A 424-amino-acid chain; its full sequence is Serine--tRNA ligase (424 aa).

229–231 (TAE) serves as a coordination point for L-serine. ATP-binding positions include 260-262 (RKE) and Val-276. An L-serine-binding site is contributed by Glu-283. 347-350 (ELVS) is a binding site for ATP. Position 383 (Thr-383) interacts with L-serine.

Belongs to the class-II aminoacyl-tRNA synthetase family. Type-1 seryl-tRNA synthetase subfamily. In terms of assembly, homodimer. The tRNA molecule binds across the dimer.

It localises to the cytoplasm. It carries out the reaction tRNA(Ser) + L-serine + ATP = L-seryl-tRNA(Ser) + AMP + diphosphate + H(+). It catalyses the reaction tRNA(Sec) + L-serine + ATP = L-seryl-tRNA(Sec) + AMP + diphosphate + H(+). It participates in aminoacyl-tRNA biosynthesis; selenocysteinyl-tRNA(Sec) biosynthesis; L-seryl-tRNA(Sec) from L-serine and tRNA(Sec): step 1/1. Functionally, catalyzes the attachment of serine to tRNA(Ser). Is also able to aminoacylate tRNA(Sec) with serine, to form the misacylated tRNA L-seryl-tRNA(Sec), which will be further converted into selenocysteinyl-tRNA(Sec). This Methanosphaera stadtmanae (strain ATCC 43021 / DSM 3091 / JCM 11832 / MCB-3) protein is Serine--tRNA ligase.